The following is a 136-amino-acid chain: MIKPIVKDILFLGQKSEEATKNDMVVIDDLIDTLRANLEHCVGLAANMIGVKKRILVFTVGNLIVPMINPVILKKEKPYETEESCLSLIGFRKTKRYETIEVTYLDRNFNKKKQVFNGFTAQIIQHEMDHFEGIII.

Fe cation-binding residues include Cys85 and His126. Glu127 is a catalytic residue. His130 is a Fe cation binding site.

The protein belongs to the polypeptide deformylase family. Requires Fe(2+) as cofactor.

It catalyses the reaction N-terminal N-formyl-L-methionyl-[peptide] + H2O = N-terminal L-methionyl-[peptide] + formate. In terms of biological role, removes the formyl group from the N-terminal Met of newly synthesized proteins. Requires at least a dipeptide for an efficient rate of reaction. N-terminal L-methionine is a prerequisite for activity but the enzyme has broad specificity at other positions. This is Peptide deformylase from Clostridium beijerinckii (strain ATCC 51743 / NCIMB 8052) (Clostridium acetobutylicum).